The sequence spans 1216 residues: AF4/FMR2 family member 1 (1216 aa).

6 disordered regions span residues 1 to 52 (MAAH…KGDE), 68 to 104 (KEFL…GAAS), 116 to 139 (IHTS…AQPR), 152 to 217 (PRLT…VSSK), 244 to 275 (AVTS…MQQK), and 352 to 728 (SWPP…RTSG). 2 stretches are compositionally biased toward basic and acidic residues: residues 9–35 (NEDR…EAFP) and 78–99 (HRLD…HDRG). Positions 166–182 (RKCDRRAEGDSAPERKL) are enriched in basic and acidic residues. Serine 183, serine 191, and serine 197 each carry phosphoserine. A compositionally biased stretch (low complexity) spans 207 to 217 (SKAHSSGVSSK). The segment covering 252–266 (PPQPPCQTFPPPPLP) has biased composition (pro residues). A compositionally biased stretch (polar residues) spans 383-406 (PATQSQKQYDTPSKTHPNPQQGTS). Acidic residues predominate over residues 408–424 (LEDDLQLSDSEDSDTEQ). Pro residues predominate over residues 429 to 438 (PPSPPAPPSA). A compositionally biased stretch (acidic residues) spans 457–484 (ESSESDSSSDSESESSSSDSEEEEENEP). Lysine 682 carries the post-translational modification N6-acetyllysine. Positions 710–728 (SQGPSHSSRGSSGSVRTSG) are enriched in low complexity. A phosphoserine mark is found at serine 755 and serine 760. Disordered stretches follow at residues 777 to 969 (RIPQ…RQQA) and 1094 to 1125 (APSP…QSSA). The span at 789–808 (RKAEDKQLSAGKKQDSETKS) shows a compositional bias: basic and acidic residues. Composition is skewed to low complexity over residues 824 to 846 (KKST…SSHT), 867 to 886 (PPAS…PSRP), 902 to 915 (PPRS…SSTD), and 1115 to 1125 (PASSVGSQSSA).

Belongs to the AF4 family. Component of the super elongation complex (SEC), at least composed of EAF1, EAF2, CDK9, MLLT3/AF9, AFF (AFF1 or AFF4), the P-TEFb complex and ELL (ELL, ELL2 or ELL3).

The protein localises to the nucleus. In Mus musculus (Mouse), this protein is AF4/FMR2 family member 1 (Aff1).